A 121-amino-acid chain; its full sequence is Large ribosomal subunit protein bL20c (121 aa).

This sequence belongs to the bacterial ribosomal protein bL20 family.

The protein resides in the plastid. It is found in the chloroplast. In terms of biological role, binds directly to 23S ribosomal RNA and is necessary for the in vitro assembly process of the 50S ribosomal subunit. It is not involved in the protein synthesizing functions of that subunit. This Lotus japonicus (Lotus corniculatus var. japonicus) protein is Large ribosomal subunit protein bL20c.